Consider the following 230-residue polypeptide: Lecithin retinol acyltransferase (230 aa).

Residues Met-1–Ser-194 are Cytoplasmic-facing. The 128-residue stretch at Val-50–Gln-177 folds into the LRAT domain. Active-site residues include His-60 and His-72. Cys-161 acts as the Acyl-thioester intermediate in catalysis. The chain crosses the membrane as a helical span at residues Val-195–Thr-215. Over Thr-216–Gly-230 the chain is Lumenal.

This sequence belongs to the H-rev107 family. Hepatic stellate cells and endothelial cells (at protein level). Found at high levels in testis and liver, followed by retinal pigment epithelium, small intestine, prostate, pancreas and colon. Low expression observed in brain. In fetal tissues, expressed in retinal pigment epithelium and liver, and barely in the brain.

The protein resides in the endoplasmic reticulum membrane. It is found in the rough endoplasmic reticulum. Its subcellular location is the endosome. It localises to the multivesicular body. The protein localises to the cytoplasm. The protein resides in the perinuclear region. It catalyses the reaction all-trans-retinol--[retinol-binding protein] + a 1,2-diacyl-sn-glycero-3-phosphocholine = apo--[retinol-binding protein] + an all-trans-retinyl ester + a 2-acyl-sn-glycero-3-phosphocholine. It carries out the reaction 1,2-dihexadecanoyl-sn-glycero-3-phosphocholine + all-trans-retinol = all-trans-retinyl hexadecanoate + 2-hexadecanoyl-sn-glycero-3-phosphocholine. The catalysed reaction is 1,2-diheptanoyl-sn-glycero-3-phosphocholine + all-trans-retinol--[retinol-binding protein] = all-trans-retinyl heptanoate + 2-heptanoyl-sn-glycero-3-phosphocholine + apo--[retinol-binding protein]. The enzyme catalyses 1,2-dioctanoyl-sn-glycero-3-phosphocholine + all-trans-retinol--[retinol-binding protein] = 2-octanoyl-sn-glycero-3-phosphocholine + all-trans-retinyl octanoate + apo--[retinol-binding protein]. It catalyses the reaction all-trans-retinol--[retinol-binding protein] + 1,2-dihexadecanoyl-sn-glycero-3-phosphocholine = apo--[retinol-binding protein] + all-trans-retinyl hexadecanoate + 2-hexadecanoyl-sn-glycero-3-phosphocholine. It carries out the reaction 1,2-didodecanoyl-sn-glycero-3-phosphocholine + all-trans-retinol--[retinol-binding protein] = 2-dodecanoyl-sn-glycero-3-phosphocholine + all-trans-retinyl dodecanoate + apo--[retinol-binding protein]. It participates in cofactor metabolism; retinol metabolism. With respect to regulation, inhibited by all-trans-retinyl alpha-bromoacetate and N-boc-L-biocytinyl-11-aminoundecane chloro-methyl ketone (BACMK). Functionally, transfers the acyl group from the sn-1 position of phosphatidylcholine to all-trans retinol, producing all-trans retinyl esters. Retinyl esters are storage forms of vitamin A. LRAT plays a critical role in vision. It provides the all-trans retinyl ester substrates for the isomerohydrolase which processes the esters into 11-cis-retinol in the retinal pigment epithelium; due to a membrane-associated alcohol dehydrogenase, 11 cis-retinol is oxidized and converted into 11-cis-retinaldehyde which is the chromophore for rhodopsin and the cone photopigments. Required for the survival of cone photoreceptors and correct rod photoreceptor cell morphology. This chain is Lecithin retinol acyltransferase, found in Homo sapiens (Human).